The sequence spans 93 residues: Small ribosomal subunit protein uS19 (93 aa).

Disordered stretches follow at residues 1–24 (MPRSLKKGPFVDDHLQKKVDAQNE) and 73–93 (EFAPTRTFKGHEKDDRKGRRR). Basic and acidic residues-rich tracts occupy residues 9–21 (PFVDDHLQKKVDA) and 81–93 (KGHEKDDRKGRRR).

The protein belongs to the universal ribosomal protein uS19 family.

Functionally, protein S19 forms a complex with S13 that binds strongly to the 16S ribosomal RNA. The polypeptide is Small ribosomal subunit protein uS19 (Kineococcus radiotolerans (strain ATCC BAA-149 / DSM 14245 / SRS30216)).